Reading from the N-terminus, the 141-residue chain is Flagellar assembly factor FliW (141 aa).

It belongs to the FliW family. In terms of assembly, interacts with translational regulator CsrA and flagellin(s).

The protein resides in the cytoplasm. In terms of biological role, acts as an anti-CsrA protein, binds CsrA and prevents it from repressing translation of its target genes, one of which is flagellin. Binds to flagellin and participates in the assembly of the flagellum. In Clostridium botulinum (strain Alaska E43 / Type E3), this protein is Flagellar assembly factor FliW.